The following is a 269-amino-acid chain: 2-dehydro-3-deoxyphosphooctonate aldolase (269 aa).

It belongs to the KdsA family.

The protein localises to the cytoplasm. It catalyses the reaction D-arabinose 5-phosphate + phosphoenolpyruvate + H2O = 3-deoxy-alpha-D-manno-2-octulosonate-8-phosphate + phosphate. It functions in the pathway carbohydrate biosynthesis; 3-deoxy-D-manno-octulosonate biosynthesis; 3-deoxy-D-manno-octulosonate from D-ribulose 5-phosphate: step 2/3. The protein operates within bacterial outer membrane biogenesis; lipopolysaccharide biosynthesis. In Chlamydia felis (strain Fe/C-56) (Chlamydophila felis), this protein is 2-dehydro-3-deoxyphosphooctonate aldolase.